Consider the following 604-residue polypeptide: UvrABC system protein C (604 aa).

Residues Glu-14 to Ile-91 form the GIY-YIG domain. Positions Glu-202 to Leu-237 constitute a UVR domain. The disordered stretch occupies residues Gly-538–Gly-557.

Belongs to the UvrC family. In terms of assembly, interacts with UvrB in an incision complex.

Its subcellular location is the cytoplasm. The UvrABC repair system catalyzes the recognition and processing of DNA lesions. UvrC both incises the 5' and 3' sides of the lesion. The N-terminal half is responsible for the 3' incision and the C-terminal half is responsible for the 5' incision. The protein is UvrABC system protein C of Chromohalobacter salexigens (strain ATCC BAA-138 / DSM 3043 / CIP 106854 / NCIMB 13768 / 1H11).